The chain runs to 775 residues: Putative late blight resistance protein homolog R1A-3 (775 aa).

Residues 16 to 39 adopt a coiled-coil conformation; sequence PRMNEEIVGFEDVIENLRKKLLSE. One can recognise an NB-ARC domain in the interval 17 to 237; the sequence is RMNEEIVGFE…LSEMEKEVEC (221 aa). 50 to 57 provides a ligand contact to ATP; that stretch reads GMPGLGKT. The region spanning 711–775 is the HMA domain; sequence IKKMILQFDI…VGKLIDSGML (65 aa).

This sequence belongs to the disease resistance NB-LRR family.

Its subcellular location is the cytoplasm. The protein localises to the membrane. Confers resistance to late blight (Phytophthora infestans) races carrying the avirulence gene Avr1. Resistance proteins guard the plant against pathogens that contain an appropriate avirulence protein via an indirect interaction with this avirulence protein. That triggers a defense system including the hypersensitive response, which restricts the pathogen growth. The polypeptide is Putative late blight resistance protein homolog R1A-3 (R1A-3) (Solanum demissum (Wild potato)).